A 393-amino-acid chain; its full sequence is Serpin-Z4 (393 aa).

The interval 342-366 (GTEAAAVSVASMTKDMLLMGDFVAD) is RCL.

The protein belongs to the serpin family.

Its function is as follows. Probable serine protease inhibitor. This is Serpin-Z4 from Arabidopsis thaliana (Mouse-ear cress).